The sequence spans 1371 residues: F-actin-uncapping protein LRRC16A (1371 aa).

At Met1 the chain carries N-acetylmethionine. A Phosphoserine modification is found at Ser122. 10 LRR repeats span residues Ser245–Ala269, Asn275–Ile298, Pro304–Gln327, Ala336–Gln363, Leu391–Gln418, Ser423–Gly447, Ile481–Ser506, Glu543–Ala566, Asn570–Lys593, and Leu654–Leu678. Residues Gly710–Leu734 are a coiled coil. Thr916 bears the Phosphothreonine mark. Disordered stretches follow at residues Pro957 to Gln1000, Lys1036 to Gly1159, and Lys1172 to Val1371. Residues Phe958–Lys981 form an LRR 11 repeat. Positions Phe958–Arg1082 are inhibits capping activity of CAPZA2. The residue at position 968 (Ser968) is a Phosphoserine. Basic and acidic residues-rich tracts occupy residues Glu977–Thr986 and Lys1036–Lys1061. The tract at residues Gly1055–Thr1089 is necessary for localization at the cell membrane. Residues Ser1067 and Ser1094 each carry the phosphoserine modification. Basic and acidic residues-rich tracts occupy residues Cys1106–Asp1130 and Glu1139–Ser1148. The segment covering Ala1190–Ala1199 has biased composition (polar residues). At Thr1228 the chain carries Phosphothreonine. Residues Lys1231–Ser1243 show a composition bias toward basic and acidic residues. Low complexity predominate over residues Arg1244–Ser1265. Phosphoserine is present on residues Ser1280, Ser1288, Ser1291, Ser1315, Ser1324, and Ser1331. Polar residues predominate over residues Gln1313–Glu1326. Residues Gln1340–Gln1353 are compositionally biased toward basic and acidic residues. Ser1360 carries the post-translational modification Phosphoserine.

This sequence belongs to the CARMIL family. As to quaternary structure, homodimer. Interacts (via C-terminus) with heterodimer capping protein (CP); this interaction uncaps barbed ends capped by CP, enhances barbed-end actin polymerization and promotes lamellipodial formation and cell migration. Interacts with heterodimer capping protein (CP). Interacts with MYO1E. Interacts with TRIO. Expressed in lung, placenta, small intestine, liver, thymus, colon, skeletal muscle, heart and brain. Higher expression in kidney.

The protein localises to the cytoplasm. Its subcellular location is the cytoskeleton. It localises to the cell membrane. It is found in the cell projection. The protein resides in the lamellipodium. Cell membrane-cytoskeleton-associated protein that plays a role in the regulation of actin polymerization at the barbed end of actin filaments. Prevents F-actin heterodimeric capping protein (CP) activity at the leading edges of migrating cells, and hence generates uncapped barbed ends and enhances actin polymerization, however, seems unable to nucleate filaments. Plays a role in lamellipodial protrusion formations and cell migration. This chain is F-actin-uncapping protein LRRC16A, found in Homo sapiens (Human).